A 1641-amino-acid polypeptide reads, in one-letter code: Cortactin-binding protein 2 (1641 aa).

The disordered stretch occupies residues 1-27; it reads MATDGASCEPDFSRAPEDAAGAPAEAA. Residues 119-276 adopt a coiled-coil conformation; it reads RKMQERMSTQ…EQLKRGNDSK (158 aa). 3 disordered regions span residues 361–433, 446–472, and 488–588; these read SHGD…HPGL, GSNANDPDQNGNTTQSPPSRDVSPTSR, and ALSR…PQGN. Polar residues predominate over residues 385-405; it reads GPSTGSTPDLTSSPTALPSTV. Arg491 carries the post-translational modification Asymmetric dimethylarginine. A compositionally biased stretch (pro residues) spans 497 to 506; sequence AGAPPRPGAP. A compositionally biased stretch (polar residues) spans 576–586; the sequence is TVASSPSSLPQ. ANK repeat units lie at residues 702–732, 736–765, 769–798, 802–831, 835–864, and 903–933; these read GRPTLLQQAAAQGNVTLLSMLLNEEGLDINY, DGHSALYSAAKNGHTDCVRLLLNAEAQVNA, NGFTPLCAAAAQGHFKCVELLIAYDANINH, GGQTPLYLACKNGNKECIKLLLEAGTDRSV, DGWTPIHAAVDTGNVDSLKLLMYHGAPAHG, and EGWTAAHIAASKGFKNCLEVLCRHGGLEPER. The segment at 1442-1468 is disordered; that stretch reads AWRKVSTSPRKKSGRFSSPTWNKPDLS. The residue at position 1512 (Ser1512) is a Phosphoserine. The interval 1544–1641 is disordered; the sequence is LRRFDSSGNN…NSRDLEPTQK (98 aa). Polar residues-rich tracts occupy residues 1551–1562 and 1570–1579; these read GNNPVFSATVNN and KEVSPLSSHQ. A compositionally biased stretch (basic and acidic residues) spans 1580 to 1590; the sequence is MTERSNSKSKT. Residues 1612–1626 are compositionally biased toward low complexity; it reads SQNTKRSSSSSNTRQ.

As to quaternary structure, interacts with CTTN/cortactin SH3 domain. Interacts with STRN, STRN4/zinedin and MOB4/phocein; this interactions mediate the association with the STRIPAK core complex and may regulate dendritic spine distribution of the STRIPAK complex in hippocampal neurons. Activation of glutamate receptors weakens the interaction with STRN and STRN4.

The protein resides in the cytoplasm. It localises to the cell cortex. It is found in the cell projection. The protein localises to the dendritic spine. Its function is as follows. Regulates the dendritic spine distribution of CTTN/cortactin in hippocampal neurons, and thus controls dendritic spinogenesis and dendritic spine maintenance. Associates with the striatin-interacting phosphatase and kinase (STRIPAK) core complex to regulate dendritic spine distribution of the STRIPAK complex in hippocampal neurons. In Ovis aries (Sheep), this protein is Cortactin-binding protein 2 (CTTNBP2).